We begin with the raw amino-acid sequence, 657 residues long: ER degradation-enhancing alpha-mannosidase-like protein 1 (657 aa).

Residues 1-4 lie on the Cytoplasmic side of the membrane; that stretch reads MQWR. The chain crosses the membrane as a helical; Signal-anchor for type II membrane protein span at residues 5-25; the sequence is ALVLGLVLLRLGLHGVLWLVF. Residues 26–657 lie on the Lumenal side of the membrane; it reads GLGPSMGFYQ…RQIDQMVGLI (632 aa). A disordered region spans residues 48-94; the sequence is SPDGPASPTSGPVGRPGGVSGPSWLQPPGTGAAQSPRKAPRRPGPGM. Residues asparagine 181, asparagine 198, asparagine 299, asparagine 342, and asparagine 624 are each glycosylated (N-linked (GlcNAc...) asparagine).

It belongs to the glycosyl hydrolase 47 family. As to quaternary structure, interacts with DNAJC10. Interacts with DERL2 and DERL3. Binds to SEL1L.

The protein resides in the endoplasmic reticulum membrane. In terms of biological role, extracts misfolded glycoproteins, but not glycoproteins undergoing productive folding, from the calnexin cycle. It is directly involved in endoplasmic reticulum-associated degradation (ERAD) and targets misfolded glycoproteins for degradation in an N-glycan-independent manner, probably by forming a complex with SEL1L. It has low mannosidase activity, catalyzing mannose trimming from Man8GlcNAc2 to Man7GlcNAc2. The chain is ER degradation-enhancing alpha-mannosidase-like protein 1 (EDEM1) from Homo sapiens (Human).